The primary structure comprises 78 residues: uncharacterized protein (78 aa).

The segment covering 56–66 has biased composition (basic and acidic residues); sequence ERANAGKRVSE. The disordered stretch occupies residues 56-78; sequence ERANAGKRVSEEEQINGKRKRKD.

This is an uncharacterized protein from Saccharomyces cerevisiae (strain ATCC 204508 / S288c) (Baker's yeast).